The following is a 764-amino-acid chain: Transient receptor potential cation channel subfamily V member 2 (764 aa).

Residues 1–46 (MTSPSSSPVFRLETLDGGQEDGSEADRGKLDFGSGLPPMESQFQGE) form a disordered region. The tract at residues 1 to 388 (MTSPSSSPVF…LLQAKWDLLI (388 aa)) is required for interaction with SLC50A1. The Cytoplasmic portion of the chain corresponds to 1–390 (MTSPSSSPVF…QAKWDLLIPK (390 aa)). S6 is modified (phosphoserine). ANK repeat units follow at residues 72-114 (NRFD…TEGS), 115-161 (TGKT…DDYY), 162-207 (RGHS…TCFY), 208-243 (FGELPLSLAACTKQWDVVSYLLENPHQPASLQATDS), 244-292 (QGNT…IRNL), and 293-319 (QDLTPLKLAAKEGKIEIFRHILQREFS). Residues 391–411 (FFLNFLCNLIYMFIFTAVAYH) traverse the membrane as a helical segment. At 412-434 (QPTLKKQAAPHLKAEVGNSMLLT) the chain is on the extracellular side. A helical transmembrane segment spans residues 435–455 (GHILILLGGIYLLVGQLWYFW). Residues 456 to 471 (RRHVFIWISFIDSYFE) are Cytoplasmic-facing. The chain crosses the membrane as a helical span at residues 472 to 492 (ILFLFQALLTVVSQVLCFLAI). E493 is a topological domain (extracellular). Residues 494–514 (WYLPLLVSALVLGWLNLLYYT) traverse the membrane as a helical segment. The Cytoplasmic segment spans residues 515–537 (RGFQHTGIYSVMIQKVILRDLLR). Residues 538 to 558 (FLLIYLVFLFGFAVALVSLSQ) form a helical membrane-spanning segment. A disordered region spans residues 562-585 (RPEAPTGPNATESVQPMEGQEDEG). N570 carries an N-linked (GlcNAc...) asparagine glycan. An intramembrane region (pore-forming) is located at residues 572–609 (TESVQPMEGQEDEGNGAQYRGILEASLELFKFTIGMGE). A helical membrane pass occupies residues 622–642 (VLLLLLAYVLLTYILLLNMLI). Over 643 to 764 (ALMSETVNSV…YVPVQLLQSN (122 aa)) the chain is Cytoplasmic. A disordered region spans residues 725–756 (PSGAGVPRTLENPVLASPPKEDEDGASEENYV). A phosphoserine mark is found at S751 and S763.

The protein belongs to the transient receptor (TC 1.A.4) family. TrpV subfamily. TRPV2 sub-subfamily. In terms of assembly, homotetramer. Interacts with a cAMP-dependent protein kinase type II regulatory subunit (PRKAR2A or PRKAR2B) and ACBD3. Interacts with SLC50A1; the interaction probably occurs intracellularly and depends on TRPV2 N-glycosylation. In terms of processing, N-glycosylated. Post-translationally, phosphorylated by PKA.

The protein localises to the cell membrane. Its subcellular location is the cytoplasm. The protein resides in the melanosome. The catalysed reaction is Ca(2+)(in) = Ca(2+)(out). It carries out the reaction Mg(2+)(in) = Mg(2+)(out). The enzyme catalyses Na(+)(in) = Na(+)(out). It catalyses the reaction K(+)(in) = K(+)(out). Functionally, calcium-permeable, non-selective cation channel with an outward rectification. Seems to be regulated, at least in part, by IGF1, PDGF and neuropeptide head activator. May transduce physical stimuli in mast cells. Activated by temperatures higher than 52 degrees Celsius; is not activated by vanilloids and acidic pH. This chain is Transient receptor potential cation channel subfamily V member 2 (TRPV2), found in Homo sapiens (Human).